The following is a 743-amino-acid chain: Phosphoribosylformylglycinamidine synthase subunit PurL (743 aa).

Residue His50 is part of the active site. 2 residues coordinate ATP: Tyr53 and Lys92. Glu94 serves as a coordination point for Mg(2+). Residues 95-98 and Arg117 each bind substrate; that span reads SHNH. The active-site Proton acceptor is His96. Residue Asp118 coordinates Mg(2+). Gln241 serves as a coordination point for substrate. Asp269 serves as a coordination point for Mg(2+). A substrate-binding site is contributed by 313-315; the sequence is ESQ. Residues Asp494 and Gly531 each contribute to the ATP site. Mg(2+) is bound at residue Asn532. Ser534 is a binding site for substrate.

This sequence belongs to the FGAMS family. Monomer. Part of the FGAM synthase complex composed of 1 PurL, 1 PurQ and 2 PurS subunits.

It is found in the cytoplasm. It carries out the reaction N(2)-formyl-N(1)-(5-phospho-beta-D-ribosyl)glycinamide + L-glutamine + ATP + H2O = 2-formamido-N(1)-(5-O-phospho-beta-D-ribosyl)acetamidine + L-glutamate + ADP + phosphate + H(+). Its pathway is purine metabolism; IMP biosynthesis via de novo pathway; 5-amino-1-(5-phospho-D-ribosyl)imidazole from N(2)-formyl-N(1)-(5-phospho-D-ribosyl)glycinamide: step 1/2. Functionally, part of the phosphoribosylformylglycinamidine synthase complex involved in the purines biosynthetic pathway. Catalyzes the ATP-dependent conversion of formylglycinamide ribonucleotide (FGAR) and glutamine to yield formylglycinamidine ribonucleotide (FGAM) and glutamate. The FGAM synthase complex is composed of three subunits. PurQ produces an ammonia molecule by converting glutamine to glutamate. PurL transfers the ammonia molecule to FGAR to form FGAM in an ATP-dependent manner. PurS interacts with PurQ and PurL and is thought to assist in the transfer of the ammonia molecule from PurQ to PurL. The protein is Phosphoribosylformylglycinamidine synthase subunit PurL of Mesorhizobium japonicum (strain LMG 29417 / CECT 9101 / MAFF 303099) (Mesorhizobium loti (strain MAFF 303099)).